Here is a 200-residue protein sequence, read N- to C-terminus: BmK-YA precursor (200 aa).

An N-terminal signal peptide occupies residues Met1–Ser23. The propeptide occupies Asp24–Asp34. The disordered stretch occupies residues Trp30–Asp200. At Ala42 the chain carries Alanine amide. A propeptide spanning residues Ser45–Asp100 is cleaved from the precursor. Residue Ala108 is modified to Alanine amide. A propeptide spanning residues Ser111–Asp144 is cleaved from the precursor. An Alanine amide modification is found at Ala152. A propeptide spanning residues Ser155 to Asp188 is cleaved from the precursor. Ala196 is modified (alanine amide). Residues Ser199–Asp200 constitute a propeptide that is removed on maturation.

As to expression, venom gland.

It is found in the secreted. Its function is as follows. Synthetic BmK-YA activates human opioid receptors in vitro, with highest activity on the delta-type/OPRD1 receptor (EC(50)=2.5 uM) and lower activity on mu-type/OPRM1 and kappa-type/OPRK1 receptors (EC(50)=17 uM and 30 uM, respectively). In Olivierus martensii (Manchurian scorpion), this protein is BmK-YA precursor.